A 244-amino-acid chain; its full sequence is Protein-L-isoaspartate O-methyltransferase (244 aa).

The segment at M1 to E39 is disordered. The active site involves S92.

The protein belongs to the methyltransferase superfamily. L-isoaspartyl/D-aspartyl protein methyltransferase family.

It is found in the cytoplasm. The catalysed reaction is [protein]-L-isoaspartate + S-adenosyl-L-methionine = [protein]-L-isoaspartate alpha-methyl ester + S-adenosyl-L-homocysteine. Functionally, catalyzes the methyl esterification of L-isoaspartyl residues in peptides and proteins that result from spontaneous decomposition of normal L-aspartyl and L-asparaginyl residues. It plays a role in the repair and/or degradation of damaged proteins. The protein is Protein-L-isoaspartate O-methyltransferase of Synechococcus sp. (strain JA-2-3B'a(2-13)) (Cyanobacteria bacterium Yellowstone B-Prime).